The sequence spans 158 residues: Lipoprotein signal peptidase (158 aa).

The next 3 helical transmembrane spans lie at 4–24 (KYYI…DQVT), 63–83 (KMGF…LFYI), and 88–108 (YNLF…GNFI). Residues Asp-118 and Asp-136 contribute to the active site. Residues 131–151 (IFNVADSSLTIGVLFIIIALL) form a helical membrane-spanning segment.

It belongs to the peptidase A8 family.

It localises to the cell membrane. The catalysed reaction is Release of signal peptides from bacterial membrane prolipoproteins. Hydrolyzes -Xaa-Yaa-Zaa-|-(S,diacylglyceryl)Cys-, in which Xaa is hydrophobic (preferably Leu), and Yaa (Ala or Ser) and Zaa (Gly or Ala) have small, neutral side chains.. It functions in the pathway protein modification; lipoprotein biosynthesis (signal peptide cleavage). Its function is as follows. This protein specifically catalyzes the removal of signal peptides from prolipoproteins. The protein is Lipoprotein signal peptidase of Staphylococcus haemolyticus (strain JCSC1435).